A 129-amino-acid chain; its full sequence is Beta-galactoside-binding lectin (129 aa).

Serine 1 carries the post-translational modification N-acetylserine. The 126-residue stretch at glycine 4–lysine 129 folds into the Galectin domain. Tryptophan 69–glutamate 75 is an a beta-D-galactoside binding site.

In terms of biological role, this protein binds beta-galactoside. Its physiological function is not yet known. In Electrophorus electricus (Electric eel), this protein is Beta-galactoside-binding lectin.